Consider the following 1103-residue polypeptide: A disintegrin and metalloproteinase with thrombospondin motifs 10 (1103 aa).

A signal peptide spans 1-25 (MAPACQILRWALALGLGLMFEVTHA). A propeptide spanning residues 26–233 (FRSQDEFLSS…TERGQPGLKR (208 aa)) is cleaved from the precursor. Residues N90, N222, and N323 are each glycosylated (N-linked (GlcNAc...) asparagine). Residues 213-233 (KPPPARPLGNETERGQPGLKR) form a disordered region. The region spanning 239-457 (RYVETLVVAD…GLGLCLNNRP (219 aa)) is the Peptidase M12B domain. 11 cysteine pairs are disulfide-bonded: C315–C376, C351–C358, C370–C452, C409–C436, C479–C501, C490–C508, C496–C531, C521–C536, C559–C596, C563–C601, and C574–C586. Residue H392 participates in Zn(2+) binding. E393 is a catalytic residue. The Zn(2+) site is built by H396 and H402. The Disintegrin domain maps to 460–546 (QDFVYPTVAP…VPFGSRPEGV (87 aa)). One can recognise a TSP type-1 1 domain in the interval 547 to 602 (DGAWGPWTPWGDCSRTCGGGVSSSSRHCDSPRPTIGGKYCLGERRRHRSCNTDDCP). The segment at 706 to 828 (ETIEGVFSPA…IARDSLPPYS (123 aa)) is spacer. N-linked (GlcNAc...) asparagine glycans are attached at residues N740 and N795. 4 consecutive TSP type-1 domains span residues 825 to 883 (PPYS…NTEP), 884 to 945 (CPPD…PTCP), 947 to 1001 (EWAA…NLRR), and 1003 to 1058 (PPAR…AKCD). N-linked (GlcNAc...) asparagine glycosylation occurs at N892. One can recognise a PLAC domain in the interval 1065–1103 (GPEECKDVNKVAYCPLVLKFQFCSRAYFRQMCCKTCHGH).

Interacts with FBN1; this interaction promotes microfibrils assembly. Requires Zn(2+) as cofactor. Post-translationally, glycosylated. Can be O-fucosylated by POFUT2 on a serine or a threonine residue found within the consensus sequence C1-X(2)-(S/T)-C2-G of the TSP type-1 repeat domains where C1 and C2 are the first and second cysteine residue of the repeat, respectively. Fucosylated repeats can then be further glycosylated by the addition of a beta-1,3-glucose residue by the glucosyltransferase, B3GALTL. Fucosylation mediates the efficient secretion of ADAMTS family members. Can also be C-glycosylated with one or two mannose molecules on tryptophan residues within the consensus sequence W-X-X-W of the TPRs, and N-glycosylated. These other glycosylations can also facilitate secretion. Widely expressed in adult tissues.

Its subcellular location is the secreted. The protein localises to the extracellular space. It localises to the extracellular matrix. Its function is as follows. Metalloprotease that participate in microfibrils assembly. Microfibrils are extracellular matrix components occurring independently or along with elastin in the formation of elastic tissues. This Homo sapiens (Human) protein is A disintegrin and metalloproteinase with thrombospondin motifs 10 (ADAMTS10).